The primary structure comprises 236 residues: ATP synthase subunit a, chloroplastic (236 aa).

Transmembrane regions (helical) follow at residues 25-45, 87-107, 123-143, 180-202, and 210-230; these read MHGQVLINSWIVLGLIIAFAV, FIGTLFLFIFVSNWSGALIPW, DINTTVALALLTSLTYFYAGL, LFGNILADELVVAVLVSLVPLVI, and GLFTSGIQALIFATLAGAYIG.

It belongs to the ATPase A chain family. F-type ATPases have 2 components, CF(1) - the catalytic core - and CF(0) - the membrane proton channel. CF(1) has five subunits: alpha(3), beta(3), gamma(1), delta(1), epsilon(1). CF(0) has four main subunits: a, b, b' and c.

The protein resides in the plastid. It is found in the chloroplast thylakoid membrane. Functionally, key component of the proton channel; it plays a direct role in the translocation of protons across the membrane. The protein is ATP synthase subunit a, chloroplastic of Ostreococcus tauri.